An 89-amino-acid chain; its full sequence is Venom peptide BmKAPI (89 aa).

A signal peptide spans 1–22 (MKFVFASFALFVIFLCFSQSLS). 5 cysteine pairs are disulfide-bonded: cysteine 28–cysteine 66, cysteine 37–cysteine 62, cysteine 41–cysteine 55, cysteine 46–cysteine 86, and cysteine 68–cysteine 80. In terms of domain architecture, TIL spans 28–86 (CRDNEVFDNCISNCGPPRCSNILNTYPCTNLGPLCTPGCKCKDGRVYDNQGRCVLQTEC).

It belongs to the serine protease inhibitor-like (TIL domain-containing) family. Expressed by the venom gland.

The protein resides in the secreted. Serine protease inhibitor. This is Venom peptide BmKAPI from Olivierus martensii (Manchurian scorpion).